A 229-amino-acid polypeptide reads, in one-letter code: Uracil-DNA glycosylase (229 aa).

Aspartate 71 acts as the Proton acceptor in catalysis.

The protein belongs to the uracil-DNA glycosylase (UDG) superfamily. UNG family.

It is found in the cytoplasm. It catalyses the reaction Hydrolyzes single-stranded DNA or mismatched double-stranded DNA and polynucleotides, releasing free uracil.. Excises uracil residues from the DNA which can arise as a result of misincorporation of dUMP residues by DNA polymerase or due to deamination of cytosine. This Campylobacter lari (strain RM2100 / D67 / ATCC BAA-1060) protein is Uracil-DNA glycosylase.